The following is a 202-amino-acid chain: uncharacterized protein (202 aa).

In terms of domain architecture, START spans 1–202 (MRGILRMTVL…KGLRSAAEKR (202 aa)).

Its function is as follows. May play a role in the interaction of the bacterium with animal cells. This is an uncharacterized protein from Pseudomonas aeruginosa (strain ATCC 15692 / DSM 22644 / CIP 104116 / JCM 14847 / LMG 12228 / 1C / PRS 101 / PAO1).